The sequence spans 495 residues: ATP synthase subunit beta, chloroplastic (495 aa).

G172–T179 contributes to the ATP binding site.

Belongs to the ATPase alpha/beta chains family. F-type ATPases have 2 components, CF(1) - the catalytic core - and CF(0) - the membrane proton channel. CF(1) has five subunits: alpha(3), beta(3), gamma(1), delta(1), epsilon(1). CF(0) has four main subunits: a(1), b(1), b'(1) and c(9-12).

It localises to the plastid. It is found in the chloroplast thylakoid membrane. The catalysed reaction is ATP + H2O + 4 H(+)(in) = ADP + phosphate + 5 H(+)(out). Produces ATP from ADP in the presence of a proton gradient across the membrane. The catalytic sites are hosted primarily by the beta subunits. The protein is ATP synthase subunit beta, chloroplastic of Scilla messeniaca (Greek squill).